Reading from the N-terminus, the 221-residue chain is Large ribosomal subunit protein uL4 (221 aa).

Positions 46–74 are disordered; it reads AGTASTKTRSEVSGGGRKPWPQKHTGRAR.

This sequence belongs to the universal ribosomal protein uL4 family. Part of the 50S ribosomal subunit.

Its function is as follows. One of the primary rRNA binding proteins, this protein initially binds near the 5'-end of the 23S rRNA. It is important during the early stages of 50S assembly. It makes multiple contacts with different domains of the 23S rRNA in the assembled 50S subunit and ribosome. In terms of biological role, forms part of the polypeptide exit tunnel. The protein is Large ribosomal subunit protein uL4 of Petrotoga mobilis (strain DSM 10674 / SJ95).